The sequence spans 498 residues: Cytochrome P450 monooxygenase ltmP (498 aa).

Residues 1–21 (MLMLHAVPVGICLLLWYVVYG) form the signal peptide. A glycan (N-linked (GlcNAc...) asparagine) is linked at Asn420. Cys435 provides a ligand contact to heme.

The protein belongs to the cytochrome P450 family. Heme is required as a cofactor.

It participates in secondary metabolite biosynthesis. Its function is as follows. Cytochrome P450 monooxygenase; part of the gene clusters that mediates the biosynthesis of lolitrems, indole-diterpene mycotoxins that are potent tremorgens in mammals, and are synthesized by clavicipitaceous fungal endophytes in association with their grass hosts. The geranylgeranyl diphosphate (GGPP) synthase ltmG is proposed to catalyze the first step in lolitrem biosynthesis. LtmG catalyzes a series of iterative condensations of isopentenyl diphosphate (IPP) with dimethylallyl diphosphate (DMAPP), geranyl diphosphate (GPP), and farnesyl diphosphate (FPP), to form GGPP. GGPP then condenses with indole-3-glycerol phosphate to form 3-geranylgeranylindole, an acyclic intermediate, to be incorporated into paxilline. Either ltmG or ltmC could be responsible for this step, as both are putative prenyl transferases. The FAD-dependent monooxygenase ltmM then catalyzes the epoxidation of the two terminal alkenes of the geranylgeranyl moiety, which is subsequently cyclized by ltmB, to paspaline. The cytochrome P450 monooxygenases ltmQ and ltmP can sequentially oxidize paspaline to terpendole E and terpendole F. Alternatively, ltmP converts paspaline to an intermediate which is oxidized by ltmQ to terpendole F. LtmF, ltmK, ltmE and ltmJ appear to be unique to the epichloe endophytes. The prenyltransferase ltmF is involved in the 27-hydroxyl-O-prenylation. The cytochrome P450 monooxygenase ltmK is required for the oxidative acetal ring formation. The multi-functional prenyltransferase ltmE is required for C20- and C21-prenylations of the indole ring of paspalanes and acts together with the cytochrome P450 monooxygenase ltmJ to yield lolitremanes by multiple oxidations and ring closures. The stereoisomer pairs of lolitriol and lolitrem N or lolitrem B and lolitrem F may be attributed to variations in the way in which ring closure can occur under the action of ltmJ. While the major product of this pathway is lolitrem B, the prenyl transferases and cytochrome P450 monooxygenases identified in this pathway have a remarkable versatility in their regio- and stereo-specificities to generate a diverse range of metabolites that are products of a metabolic grid rather than a linear pathway. The chain is Cytochrome P450 monooxygenase ltmP from Epichloe festucae var. lolii (Neotyphodium lolii).